The sequence spans 811 residues: Serine/threonine-protein kinase prpf4B (811 aa).

Disordered regions lie at residues 1–257 (MVIE…TNEP), 288–341 (EKYN…NQIE), 353–379 (KDQN…EDLK), and 408–452 (VSIK…TNGG). Positions 46–71 (SSPASRETSSSKLMSPSKNQSSSSSR) are enriched in low complexity. Residues 81–202 (RRKDERYSSS…DNMDSRDNKN (122 aa)) show a composition bias toward basic and acidic residues. Over residues 203 to 215 (GSRQSINNNTLSY) the composition is skewed to polar residues. Over residues 217-240 (KQADRKDEVRVKDNISVNDDKTNH) the composition is skewed to basic and acidic residues. Polar residues-rich tracts occupy residues 241-257 (GENL…TNEP) and 293-302 (EQPQPITSSL). Residues 310-327 (SNTNTNSNSTPVATTTTS) are compositionally biased toward low complexity. The Protein kinase domain maps to 490–808 (YQIFSPIGSG…PFEALNHEFL (319 aa)). Residues 496-504 (IGSGVFSTV) and K519 each bind ATP. Residue D619 is the Proton acceptor of the active site.

The protein belongs to the protein kinase superfamily. CMGC Ser/Thr protein kinase family. Phosphorylated. Autophosphorylated; phosphorylation inhibits interaction with its targets.

It localises to the nucleus. Its subcellular location is the chromosome. It is found in the centromere. The protein resides in the kinetochore. It catalyses the reaction L-seryl-[protein] + ATP = O-phospho-L-seryl-[protein] + ADP + H(+). The catalysed reaction is L-threonyl-[protein] + ATP = O-phospho-L-threonyl-[protein] + ADP + H(+). Functionally, serine/threonine kinase involved in spliceosomal assembly as well as mitosis and signaling regulation. This Dictyostelium discoideum (Social amoeba) protein is Serine/threonine-protein kinase prpf4B (prp4k).